Consider the following 550-residue polypeptide: Probable endochitinase (550 aa).

A signal peptide spans 1-16 (MLHYLATILWLAVAHA). N-linked (GlcNAc...) asparagine; by host glycosylation is found at Asn-146 and Asn-172. The 401-residue stretch at 147–547 (KTVAAYFVEW…NAMNERVRVK (401 aa)) folds into the GH18 domain. The active-site Proton donor is the Glu-304. Asn-344 carries N-linked (GlcNAc...) asparagine; by host glycosylation. The short motif at 547 to 550 (KDEL) is the Prevents secretion from ER element.

This sequence belongs to the glycosyl hydrolase 18 family. Chitinase class II subfamily.

It is found in the host endoplasmic reticulum lumen. It carries out the reaction Random endo-hydrolysis of N-acetyl-beta-D-glucosaminide (1-&gt;4)-beta-linkages in chitin and chitodextrins.. In Orgyia pseudotsugata (Douglas-fir tussock moth), this protein is Probable endochitinase.